We begin with the raw amino-acid sequence, 329 residues long: Phosphate acyltransferase (329 aa).

This sequence belongs to the PlsX family. As to quaternary structure, homodimer. Probably interacts with PlsY.

It is found in the cytoplasm. It catalyses the reaction a fatty acyl-[ACP] + phosphate = an acyl phosphate + holo-[ACP]. The protein operates within lipid metabolism; phospholipid metabolism. Its function is as follows. Catalyzes the reversible formation of acyl-phosphate (acyl-PO(4)) from acyl-[acyl-carrier-protein] (acyl-ACP). This enzyme utilizes acyl-ACP as fatty acyl donor, but not acyl-CoA. The sequence is that of Phosphate acyltransferase from Anoxybacillus flavithermus (strain DSM 21510 / WK1).